The following is a 461-amino-acid chain: Ufm1-specific protease 2 (461 aa).

Active-site residues include cysteine 294, aspartate 418, and histidine 420.

This sequence belongs to the peptidase C78 family.

The protein resides in the endoplasmic reticulum. It localises to the cytoplasm. It is found in the nucleus. Functionally, thiol-dependent isopeptidase that specifically cleaves UFM1, a ubiquitin-like modifier protein, from conjugated proteins, such as CD274/PD-L1, CYB5R3, DDRGK1, MRE11, RPL26/uL24, TRIP4 and RPL26/uL24. While it is also able to mediate the processing of UFM1 precursors, a prerequisite for conjugation reactions, UFSP2 mainly acts as a protein deUFMylase that mediates deconjugation of UFM1 from target proteins. Mediates deUFMylation of RPL26/uL24, a critical step to release the UFM1 ribosome E3 ligase (UREL) complex during the recycling of 60S ribosome subunits from the endoplasmic reticulum. Catalyzes deUFMylation of TRIP4, regulating intracellular nuclear receptors transactivation and thereby regulate cell proliferation and differentiation. The sequence is that of Ufm1-specific protease 2 from Rattus norvegicus (Rat).